The chain runs to 268 residues: Probable chemotaxis protein methyltransferase (268 aa).

One can recognise a CheR-type methyltransferase domain in the interval 1–262 (MIYSDAGIFL…GITTYRYTTK (262 aa)). S-adenosyl-L-methionine-binding positions include Asn-60, Thr-62, Arg-66, Glu-104, Asp-130, 188–189 (NL), and 205–206 (RN).

The catalysed reaction is L-glutamyl-[protein] + S-adenosyl-L-methionine = [protein]-L-glutamate 5-O-methyl ester + S-adenosyl-L-homocysteine. Methylation of the membrane-bound methyl-accepting chemotaxis proteins (MCP) to form gamma-glutamyl methyl ester residues in MCP. This is Probable chemotaxis protein methyltransferase (cheRch1) from Rhizobium etli (strain ATCC 51251 / DSM 11541 / JCM 21823 / NBRC 15573 / CFN 42).